Consider the following 335-residue polypeptide: Ketol-acid reductoisomerase (NADP(+)) (335 aa).

One can recognise a KARI N-terminal Rossmann domain in the interval Ser-5–Thr-185. Residues Tyr-28–Gln-31, Ser-56, and Asp-86–Gln-89 each bind NADP(+). His-111 is a catalytic residue. An NADP(+)-binding site is contributed by Gly-137. In terms of domain architecture, KARI C-terminal knotted spans Thr-186 to Gly-331. Residues Asp-194, Glu-198, Glu-230, and Glu-234 each contribute to the Mg(2+) site. Substrate is bound at residue Ser-255.

It belongs to the ketol-acid reductoisomerase family. It depends on Mg(2+) as a cofactor.

The enzyme catalyses (2R)-2,3-dihydroxy-3-methylbutanoate + NADP(+) = (2S)-2-acetolactate + NADPH + H(+). The catalysed reaction is (2R,3R)-2,3-dihydroxy-3-methylpentanoate + NADP(+) = (S)-2-ethyl-2-hydroxy-3-oxobutanoate + NADPH + H(+). It functions in the pathway amino-acid biosynthesis; L-isoleucine biosynthesis; L-isoleucine from 2-oxobutanoate: step 2/4. Its pathway is amino-acid biosynthesis; L-valine biosynthesis; L-valine from pyruvate: step 2/4. Functionally, involved in the biosynthesis of branched-chain amino acids (BCAA). Catalyzes an alkyl-migration followed by a ketol-acid reduction of (S)-2-acetolactate (S2AL) to yield (R)-2,3-dihydroxy-isovalerate. In the isomerase reaction, S2AL is rearranged via a Mg-dependent methyl migration to produce 3-hydroxy-3-methyl-2-ketobutyrate (HMKB). In the reductase reaction, this 2-ketoacid undergoes a metal-dependent reduction by NADPH to yield (R)-2,3-dihydroxy-isovalerate. This is Ketol-acid reductoisomerase (NADP(+)) from Saccharolobus islandicus (strain M.16.27) (Sulfolobus islandicus).